A 315-amino-acid polypeptide reads, in one-letter code: Acetyl-coenzyme A carboxylase carboxyl transferase subunit alpha (315 aa).

In terms of domain architecture, CoA carboxyltransferase C-terminal spans 35-289 (KLSKKRFELM…RKAVAAELKI (255 aa)).

This sequence belongs to the AccA family. As to quaternary structure, acetyl-CoA carboxylase is a heterohexamer composed of biotin carboxyl carrier protein (AccB), biotin carboxylase (AccC) and two subunits each of ACCase subunit alpha (AccA) and ACCase subunit beta (AccD).

The protein localises to the cytoplasm. The enzyme catalyses N(6)-carboxybiotinyl-L-lysyl-[protein] + acetyl-CoA = N(6)-biotinyl-L-lysyl-[protein] + malonyl-CoA. It functions in the pathway lipid metabolism; malonyl-CoA biosynthesis; malonyl-CoA from acetyl-CoA: step 1/1. Its function is as follows. Component of the acetyl coenzyme A carboxylase (ACC) complex. First, biotin carboxylase catalyzes the carboxylation of biotin on its carrier protein (BCCP) and then the CO(2) group is transferred by the carboxyltransferase to acetyl-CoA to form malonyl-CoA. In Francisella tularensis subsp. mediasiatica (strain FSC147), this protein is Acetyl-coenzyme A carboxylase carboxyl transferase subunit alpha.